We begin with the raw amino-acid sequence, 141 residues long: Hemoglobin subunit alpha (141 aa).

The 141-residue stretch at 1 to 141 (VLSPADKTNV…VSTVLTSKYR (141 aa)) folds into the Globin domain. The residue at position 3 (S3) is a Phosphoserine. K7 carries the N6-succinyllysine modification. T8 carries the phosphothreonine modification. K11 carries the post-translational modification N6-succinyllysine. K16 carries the N6-acetyllysine; alternate modification. Position 16 is an N6-succinyllysine; alternate (K16). Y24 is subject to Phosphotyrosine. S35 carries the phosphoserine modification. N6-succinyllysine is present on K40. S49 carries the post-translational modification Phosphoserine. H58 contacts O2. Heme b is bound at residue H87. S102 is modified (phosphoserine). T108 is subject to Phosphothreonine. 2 positions are modified to phosphoserine: S124 and S131. Phosphothreonine is present on residues T134 and T137. S138 is subject to Phosphoserine.

Belongs to the globin family. Heterotetramer of two alpha chains and two beta chains. Red blood cells.

Its function is as follows. Involved in oxygen transport from the lung to the various peripheral tissues. Functionally, hemopressin acts as an antagonist peptide of the cannabinoid receptor CNR1. Hemopressin-binding efficiently blocks cannabinoid receptor CNR1 and subsequent signaling. The protein is Hemoglobin subunit alpha (HBA) of Taphozous georgianus (Sharp-nosed tomb bat).